A 441-amino-acid polypeptide reads, in one-letter code: Polycomb protein EED (441 aa).

Positions 1 to 72 (MSEREVSTAP…PGRKSWGKGK (72 aa)) are disordered. Serine 2 bears the N-acetylserine mark. 2 positions are modified to phosphoserine: serine 2 and serine 34. Over residues 45-61 (ESGTNTERPDTPTNTPN) the composition is skewed to polar residues. Residue threonine 55 is modified to Phosphothreonine. N6,N6,N6-trimethyllysine; alternate is present on lysine 66. Lysine 66 is subject to N6,N6-dimethyllysine; alternate. At lysine 66 the chain carries N6-methyllysine; alternate. The interaction with EZH2 stretch occupies residues 81–441 (SFKCVNSLKE…ASIWRWDRLR (361 aa)). 4 WD repeats span residues 91 to 134 (DHNQ…EIRL), 142 to 185 (DADE…CIKH), 188 to 228 (GHGN…LVAI), and 234 to 275 (GHRD…NAIK). 2 required for interaction with the matrix protein MA of HIV-1 regions span residues 149–303 (TCAW…STRD) and 301–441 (TRDI…DRLR). Residues lysine 197, lysine 268, and lysine 284 each carry the N6,N6,N6-trimethyllysine; alternate modification. Lysine 197, lysine 268, and lysine 284 each carry N6,N6-dimethyllysine; alternate. Residues lysine 197, lysine 268, and lysine 284 each carry the N6-methyllysine; alternate modification. WD repeat units lie at residues 304-341 (IHRNYVDCVRWLGDLILSKSCENAIVCWKPGKMEDDID), 359-399 (SQCD…PHKA), and 408-441 (KCGAAIRQTSFSRDSSILIAVCDDASIWRWDRLR).

Belongs to the WD repeat ESC family. In terms of assembly, component of the PRC2/EED-EZH2 complex, which includes EED, EZH2, SUZ12, RBBP4 and RBBP7 and possibly AEBP2. The minimum components required for methyltransferase activity of the PRC2/EED-EZH2 complex are EED, EZH2 and SUZ12. Component of the PRC2/EED-EZH1 complex, which includes EED, EZH1, SUZ12, RBBP4 and AEBP2. The PRC2 complex may also interact with DNMT1, DNMT3A, DNMT3B and PHF1 via the EZH2 subunit and with SIRT1 via the SUZ12 subunit. Interacts with HDAC, HDAC2, histone H1 and YY1. May interact with ITGA4, ITGAE and ITGB7. Interacts with CDYL. Interacts with BMAL1. Interacts with KMT2A/MLL1. As to quaternary structure, (Microbial infection) May interact with the MA protein of HIV-1. Methylated. Binding to histone H1 'Lys-26' promotes mono-, di-, and trimethylation of internal lysines. As to expression, expressed in brain, colon, heart, kidney, liver, lung, muscle, ovary, peripheral blood leukocytes, pancreas, placenta, prostate, spleen, small intestine, testis, thymus and uterus. Appears to be overexpressed in breast and colon cancer.

It localises to the nucleus. The protein localises to the chromosome. In terms of biological role, polycomb group (PcG) protein. Component of the PRC2/EED-EZH2 complex, which methylates 'Lys-9' and 'Lys-27' of histone H3, leading to transcriptional repression of the affected target gene. Also recognizes 'Lys-26' trimethylated histone H1 with the effect of inhibiting PRC2 complex methyltransferase activity on nucleosomal histone H3 'Lys-27', whereas H3 'Lys-27' recognition has the opposite effect, enabling the propagation of this repressive mark. The PRC2/EED-EZH2 complex may also serve as a recruiting platform for DNA methyltransferases, thereby linking two epigenetic repression systems. Genes repressed by the PRC2/EED-EZH2 complex include HOXC8, HOXA9, MYT1 and CDKN2A. The chain is Polycomb protein EED from Homo sapiens (Human).